Here is a 450-residue protein sequence, read N- to C-terminus: Ribosomal protein uS12 methylthiotransferase RimO (450 aa).

The MTTase N-terminal domain occupies 16-126 (PRISFVSLGC…VLDAVHQAVP (111 aa)). Positions 25, 61, 90, 157, 161, and 164 each coordinate [4Fe-4S] cluster. The Radical SAM core domain occupies 143-380 (LTPRHYAYLK…MLKQQAISAR (238 aa)). The TRAM domain maps to 383-449 (KRKVGTRQQV…AYDLIGSAVG (67 aa)).

Belongs to the methylthiotransferase family. RimO subfamily. The cofactor is [4Fe-4S] cluster.

It localises to the cytoplasm. It carries out the reaction L-aspartate(89)-[ribosomal protein uS12]-hydrogen + (sulfur carrier)-SH + AH2 + 2 S-adenosyl-L-methionine = 3-methylsulfanyl-L-aspartate(89)-[ribosomal protein uS12]-hydrogen + (sulfur carrier)-H + 5'-deoxyadenosine + L-methionine + A + S-adenosyl-L-homocysteine + 2 H(+). Its function is as follows. Catalyzes the methylthiolation of an aspartic acid residue of ribosomal protein uS12. The sequence is that of Ribosomal protein uS12 methylthiotransferase RimO from Azorhizobium caulinodans (strain ATCC 43989 / DSM 5975 / JCM 20966 / LMG 6465 / NBRC 14845 / NCIMB 13405 / ORS 571).